The primary structure comprises 431 residues: Adenylosuccinate synthetase (431 aa).

GTP contacts are provided by residues 13–19 (GDEGKGK) and 41–43 (GHT). Aspartate 14 functions as the Proton acceptor in the catalytic mechanism. Mg(2+)-binding residues include aspartate 14 and glycine 41. Residues 14-17 (DEGK), 39-42 (NAGH), threonine 130, arginine 144, glutamine 225, threonine 240, and arginine 304 contribute to the IMP site. Residue histidine 42 is the Proton donor of the active site. 300-306 (ATTHRPR) is a binding site for substrate. Residues arginine 306, 332-334 (KLD), and 414-416 (STG) each bind GTP.

Belongs to the adenylosuccinate synthetase family. In terms of assembly, homodimer. Mg(2+) is required as a cofactor.

It is found in the cytoplasm. It catalyses the reaction IMP + L-aspartate + GTP = N(6)-(1,2-dicarboxyethyl)-AMP + GDP + phosphate + 2 H(+). It functions in the pathway purine metabolism; AMP biosynthesis via de novo pathway; AMP from IMP: step 1/2. Its function is as follows. Plays an important role in the de novo pathway of purine nucleotide biosynthesis. Catalyzes the first committed step in the biosynthesis of AMP from IMP. The sequence is that of Adenylosuccinate synthetase from Nitrosococcus oceani (strain ATCC 19707 / BCRC 17464 / JCM 30415 / NCIMB 11848 / C-107).